The following is a 433-amino-acid chain: Inorganic triphosphatase (433 aa).

One can recognise a CYTH domain in the interval 2–202; the sequence is AQEIELKFIV…ARGYHLAQGN (201 aa). The CHAD domain occupies 218–433; that stretch reads KADVEQGLEA…EPFWLHSGKR (216 aa).

The enzyme catalyses triphosphate + H2O = phosphate + diphosphate. Its activity is regulated as follows. Inhibited by calcium ion and activated by magnesium ion. Functionally, involved in the hydrolysis of the beta-gamma-phosphoanhydride linkage of triphosphate-containing substrates (inorganic or nucleoside-linked). Catalyzes the hydrolysis of inorganic triphosphate (PPPi), which could be cytotoxic because of its high affinity for calcium ion, thereby interfering with calcium signaling. It also hydrolyzes slowly thiamine triphosphate (ThTP). YgiF is a specific PPPase, but it contributes only marginally to the total PPPase activity in E.coli, where the main enzyme responsible for hydrolysis of PPPi is inorganic pyrophosphatase (PPase). The polypeptide is Inorganic triphosphatase (ygiF) (Escherichia coli (strain K12)).